The primary structure comprises 390 residues: Chorismate synthase 1 (390 aa).

2 residues coordinate NADP(+): Arg39 and Arg45. A disordered region spans residues 95-117 (EQEEKEMKRKVTKPRPGHADLNG). FMN is bound by residues 132-134 (RSS), 253-254 (NA), Gly298, 313-317 (KPIPT), and Arg339.

The protein belongs to the chorismate synthase family. As to quaternary structure, homotetramer. The cofactor is FMNH2.

The enzyme catalyses 5-O-(1-carboxyvinyl)-3-phosphoshikimate = chorismate + phosphate. The protein operates within metabolic intermediate biosynthesis; chorismate biosynthesis; chorismate from D-erythrose 4-phosphate and phosphoenolpyruvate: step 7/7. Its function is as follows. Catalyzes the anti-1,4-elimination of the C-3 phosphate and the C-6 proR hydrogen from 5-enolpyruvylshikimate-3-phosphate (EPSP) to yield chorismate, which is the branch point compound that serves as the starting substrate for the three terminal pathways of aromatic amino acid biosynthesis. This reaction introduces a second double bond into the aromatic ring system. This Bacillus cereus (strain ZK / E33L) protein is Chorismate synthase 1.